We begin with the raw amino-acid sequence, 584 residues long: Adenine deaminase (584 aa).

This sequence belongs to the metallo-dependent hydrolases superfamily. Adenine deaminase family. It depends on Mn(2+) as a cofactor.

The catalysed reaction is adenine + H2O + H(+) = hypoxanthine + NH4(+). This is Adenine deaminase from Methanococcoides burtonii (strain DSM 6242 / NBRC 107633 / OCM 468 / ACE-M).